The sequence spans 99 residues: METLTFEFPAGAPARGRALAGCVGSGDLEVLLEPAAGGALSIQVVTSVNGSGPRWQQLFARVFAAPTAPAASIRIHDFGATPGVVRLRLEQALEEAGHD.

Ser-25 bears the O-(phosphoribosyl dephospho-coenzyme A)serine mark.

Belongs to the MdcC family. Covalently binds the prosthetic group of malonate decarboxylase.

It is found in the cytoplasm. Subunit of malonate decarboxylase, it is an acyl carrier protein to which acetyl and malonyl thioester residues are bound via a 2'-(5''-phosphoribosyl)-3'-dephospho-CoA prosthetic group and turn over during the catalytic mechanism. The protein is Malonate decarboxylase acyl carrier protein of Pseudomonas aeruginosa (strain LESB58).